A 132-amino-acid chain; its full sequence is DNA-directed RNA polymerase subunit omega (132 aa).

The interval 100–119 (VSAEEEASHGTAGMSAEELE) is disordered.

The protein belongs to the RNA polymerase subunit omega family. In terms of assembly, the RNAP catalytic core consists of 2 alpha, 1 beta, 1 beta' and 1 omega subunit. When a sigma factor is associated with the core the holoenzyme is formed, which can initiate transcription.

The catalysed reaction is RNA(n) + a ribonucleoside 5'-triphosphate = RNA(n+1) + diphosphate. In terms of biological role, promotes RNA polymerase assembly. Latches the N- and C-terminal regions of the beta' subunit thereby facilitating its interaction with the beta and alpha subunits. The polypeptide is DNA-directed RNA polymerase subunit omega (Gluconacetobacter diazotrophicus (strain ATCC 49037 / DSM 5601 / CCUG 37298 / CIP 103539 / LMG 7603 / PAl5)).